A 436-amino-acid polypeptide reads, in one-letter code: 3-ketoacyl-CoA thiolase (436 aa).

The active-site Acyl-thioester intermediate is the Cys99. Active-site proton acceptor residues include His392 and Cys422.

The protein belongs to the thiolase-like superfamily. Thiolase family. In terms of assembly, heterotetramer of two alpha chains (FadJ) and two beta chains (FadI).

Its subcellular location is the cytoplasm. The enzyme catalyses an acyl-CoA + acetyl-CoA = a 3-oxoacyl-CoA + CoA. It functions in the pathway lipid metabolism; fatty acid beta-oxidation. Functionally, catalyzes the final step of fatty acid oxidation in which acetyl-CoA is released and the CoA ester of a fatty acid two carbons shorter is formed. The chain is 3-ketoacyl-CoA thiolase from Salmonella paratyphi B (strain ATCC BAA-1250 / SPB7).